A 248-amino-acid chain; its full sequence is 1,2-phenylacetyl-CoA epoxidase, subunit C (248 aa).

Substrate-binding positions include Gln-76–Asn-79 and Ile-177–Leu-179.

As to quaternary structure, forms a stable heterotetramer (dimer of heterodimers) with PaaA and a stable heterodimer with PaaB.

It functions in the pathway aromatic compound metabolism; phenylacetate degradation. Its function is as follows. Component of 1,2-phenylacetyl-CoA epoxidase multicomponent enzyme system which catalyzes the reduction of phenylacetyl-CoA (PA-CoA) to form 1,2-epoxyphenylacetyl-CoA. The subunit C may be essential for structural integrity of the alpha subunit. The polypeptide is 1,2-phenylacetyl-CoA epoxidase, subunit C (paaC) (Escherichia coli (strain K12)).